The sequence spans 324 residues: Polyketide biosynthesis acyltransferase homolog BaeD (324 aa).

The active site involves Ser99.

The protein localises to the cytoplasm. It participates in antibiotic biosynthesis; bacillaene biosynthesis. In terms of biological role, probably involved in some intermediate steps for the synthesis of the antibiotic polyketide bacillaene which is involved in secondary metabolism. This Bacillus velezensis (strain DSM 23117 / BGSC 10A6 / LMG 26770 / FZB42) (Bacillus amyloliquefaciens subsp. plantarum) protein is Polyketide biosynthesis acyltransferase homolog BaeD (baeD).